The sequence spans 255 residues: Hemin import ATP-binding protein HmuV (255 aa).

In terms of domain architecture, ABC transporter spans 2 to 238 (LQVEGLYLCR…AALKAVYGID (237 aa)). Residue 34–41 (GPNGAGKS) coordinates ATP.

It belongs to the ABC transporter superfamily. Heme (hemin) importer (TC 3.A.1.14.5) family. As to quaternary structure, the complex is composed of two ATP-binding proteins (HmuV), two transmembrane proteins (HmuU) and a solute-binding protein (HmuT).

It localises to the cell inner membrane. In terms of biological role, part of the ABC transporter complex HmuTUV involved in hemin import. Responsible for energy coupling to the transport system. In Pseudomonas putida (strain ATCC 47054 / DSM 6125 / CFBP 8728 / NCIMB 11950 / KT2440), this protein is Hemin import ATP-binding protein HmuV.